Reading from the N-terminus, the 856-residue chain is Genome polyprotein (856 aa).

The Peptidase S30 domain occupies 141–284 (KLTESQMNHL…QGVLNSMVQF (144 aa)). Catalysis depends on for P1 proteinase activity residues His192, Asp201, and Ser235. The short motif at 592–594 (PTK) is the Involved in virions binding and aphid transmission element. Residues 618–740 (LYIAKQGYCY…ESEIKHYRVG (123 aa)) enclose the Peptidase C6 domain. Residues Cys626 and His699 each act as for helper component proteinase activity in the active site.

The protein belongs to the potyviridae genome polyprotein family. Genome polyprotein of potyviruses undergoes post-translational proteolytic processing by the main proteinase NIa-pro resulting in the production of at least ten individual proteins. The P1 proteinase and the HC-pro cleave only their respective C-termini autocatalytically. 6K1 is essential for proper proteolytic separation of P3 from CI.

The enzyme catalyses Hydrolyzes a Gly-|-Gly bond at its own C-terminus, commonly in the sequence -Tyr-Xaa-Val-Gly-|-Gly, in the processing of the potyviral polyprotein.. Its function is as follows. Required for aphid transmission and also has proteolytic activity. Only cleaves a Gly-Gly dipeptide at its own C-terminus. Interacts with virions and aphid stylets. Acts as a suppressor of RNA-mediated gene silencing, also known as post-transcriptional gene silencing (PTGS), a mechanism of plant viral defense that limits the accumulation of viral RNAs. May have RNA-binding activity. This is Genome polyprotein from Potato virus Y (strain C) (PVY).